The primary structure comprises 394 residues: 1-deoxy-D-xylulose 5-phosphate reductoisomerase (394 aa).

Residues T12, G13, S14, I15, G38, N41, and N132 each coordinate NADPH. K133 contacts 1-deoxy-D-xylulose 5-phosphate. Residue E134 coordinates NADPH. D156 is a binding site for Mn(2+). The 1-deoxy-D-xylulose 5-phosphate site is built by S157, E158, S182, and H205. E158 contacts Mn(2+). G211 serves as a coordination point for NADPH. The 1-deoxy-D-xylulose 5-phosphate site is built by S218, N223, K224, and E227. E227 is a binding site for Mn(2+).

It belongs to the DXR family. Mg(2+) serves as cofactor. Mn(2+) is required as a cofactor.

The enzyme catalyses 2-C-methyl-D-erythritol 4-phosphate + NADP(+) = 1-deoxy-D-xylulose 5-phosphate + NADPH + H(+). The protein operates within isoprenoid biosynthesis; isopentenyl diphosphate biosynthesis via DXP pathway; isopentenyl diphosphate from 1-deoxy-D-xylulose 5-phosphate: step 1/6. Its function is as follows. Catalyzes the NADPH-dependent rearrangement and reduction of 1-deoxy-D-xylulose-5-phosphate (DXP) to 2-C-methyl-D-erythritol 4-phosphate (MEP). This is 1-deoxy-D-xylulose 5-phosphate reductoisomerase from Arthrobacter sp. (strain FB24).